The sequence spans 685 residues: Multicopper oxidase VdtB (685 aa).

Residues 1–17 form the signal peptide; it reads MPAYLLLLACNVLLVLG. Plastocyanin-like domains follow at residues 26–139 and 168–368; these read LTWE…IRRK and IMML…RYKN. A glycan (N-linked (GlcNAc...) asparagine) is linked at N71. Cu cation is bound by residues H75, H77, H119, and H121. N-linked (GlcNAc...) asparagine glycosylation is found at N178, N229, N253, N432, and N475. In terms of domain architecture, Plastocyanin-like 3 spans 466 to 585; it reads DDDLIIRTQN…DNGMAMAILD (120 aa). H500 lines the Cu cation pocket. N517 is a glycosylation site (N-linked (GlcNAc...) asparagine). A helical transmembrane segment spans residues 627–647; the sequence is SLVWAGGAAVVLLSLFIGGLW.

It belongs to the multicopper oxidase family.

Its subcellular location is the membrane. It catalyses the reaction 4 semiviriditoxin + O2 = 2 (M)-viriditoxin + 2 H2O. The protein operates within secondary metabolite biosynthesis. Functionally, multicopper oxidase; part of the gene cluster that mediates the biosynthesis of viriditoxin, one of the 'classical' secondary metabolites produced by fungi and that has antibacterial activity. The first step is performed by the polyketide synthase VdtA which condenses one acetyl-CoA and 6 malonyl-CoA units to form the heptaketide monomer backbone of viriditoxin. The product of VdtA is then O-methylated on C7 by the O-methyltransferase VdtC. The O-methyl group is important for the stereoselective coupling of the monomers at the final step of viriditoxin biosynthesis. The short-chain dehydrogenase/reductase VdtF then acts as a stereospecific reductase converting the pyrone to dihydropyrone via the reduction of the C3-C4 double bond. The FAD-binding monooxygenase VdtE then converts the ketone group into a methyl-ester group to yield semi-viriditoxin. Finally, the laccase VdtB is involved in dimerization of 2 semi-viriditoxin molecules to yield the final viriditoxin. VdtB is responsible for the regioselective 6,6'-coupling of semi-viriditoxin, which yields (M)-viriditoxin and (P)-viriditoxin at a ratio of 1:2. The non-catalytic carboxylesterase-like protein VdtD affects the stereochemistical outcome of the coupling. The highly reducing polyketide synthase VdtX is not involved in viriditoxin synthesis, but might possibly play a role in the production of additional metabolites not identified yet. The polypeptide is Multicopper oxidase VdtB (Byssochlamys spectabilis (Paecilomyces variotii)).